Here is a 299-residue protein sequence, read N- to C-terminus: Tyrosine recombinase XerC (299 aa).

Residues 1 to 86 (MRNELLDFLE…AIRSLFKFLT (86 aa)) enclose the Core-binding (CB) domain. The Tyr recombinase domain occupies 107–293 (KLPEFLSIEE…NQARMTEVYN (187 aa)). Residues Arg-146, Lys-170, His-245, Arg-248, and His-271 contribute to the active site. The active-site O-(3'-phospho-DNA)-tyrosine intermediate is the Tyr-280.

The protein belongs to the 'phage' integrase family. XerC subfamily. In terms of assembly, forms a cyclic heterotetrameric complex composed of two molecules of XerC and two molecules of XerD.

Its subcellular location is the cytoplasm. Its function is as follows. Site-specific tyrosine recombinase, which acts by catalyzing the cutting and rejoining of the recombining DNA molecules. The XerC-XerD complex is essential to convert dimers of the bacterial chromosome into monomers to permit their segregation at cell division. It also contributes to the segregational stability of plasmids. The sequence is that of Tyrosine recombinase XerC from Natranaerobius thermophilus (strain ATCC BAA-1301 / DSM 18059 / JW/NM-WN-LF).